A 549-amino-acid polypeptide reads, in one-letter code: Chaperonin GroEL 5 (549 aa).

Residues 30–33 (TLGP), lysine 51, 87–91 (DGTTT), glycine 415, and aspartate 495 each bind ATP.

This sequence belongs to the chaperonin (HSP60) family. Forms a cylinder of 14 subunits composed of two heptameric rings stacked back-to-back. Interacts with the co-chaperonin GroES.

The protein resides in the cytoplasm. The catalysed reaction is ATP + H2O + a folded polypeptide = ADP + phosphate + an unfolded polypeptide.. In terms of biological role, together with its co-chaperonin GroES, plays an essential role in assisting protein folding. The GroEL-GroES system forms a nano-cage that allows encapsulation of the non-native substrate proteins and provides a physical environment optimized to promote and accelerate protein folding. The polypeptide is Chaperonin GroEL 5 (Mesorhizobium japonicum (strain LMG 29417 / CECT 9101 / MAFF 303099) (Mesorhizobium loti (strain MAFF 303099))).